The chain runs to 941 residues: Isoleucine--tRNA ligase (941 aa).

The 'HIGH' region signature appears at 59-69; that stretch reads PYANGNIHIGH. Glu562 is an L-isoleucyl-5'-AMP binding site. A 'KMSKS' region motif is present at residues 603-607; it reads KMSKS. Lys606 contributes to the ATP binding site. Zn(2+) is bound by residues Cys904, Cys907, Cys924, and Cys927.

Belongs to the class-I aminoacyl-tRNA synthetase family. IleS type 1 subfamily. Monomer. Requires Zn(2+) as cofactor.

It localises to the cytoplasm. It catalyses the reaction tRNA(Ile) + L-isoleucine + ATP = L-isoleucyl-tRNA(Ile) + AMP + diphosphate. In terms of biological role, catalyzes the attachment of isoleucine to tRNA(Ile). As IleRS can inadvertently accommodate and process structurally similar amino acids such as valine, to avoid such errors it has two additional distinct tRNA(Ile)-dependent editing activities. One activity is designated as 'pretransfer' editing and involves the hydrolysis of activated Val-AMP. The other activity is designated 'posttransfer' editing and involves deacylation of mischarged Val-tRNA(Ile). This chain is Isoleucine--tRNA ligase, found in Haemophilus influenzae (strain 86-028NP).